Here is a 482-residue protein sequence, read N- to C-terminus: Long chain base biosynthesis protein 1c (482 aa).

Residues 33–53 (FGIHIDGHLVVEGLLIAAILF) form a helical membrane-spanning segment.

The protein belongs to the class-II pyridoxal-phosphate-dependent aminotransferase family. In terms of assembly, heterodimer with LCB2. Component of the serine palmitoyltransferase (SPT) complex, composed of LCB1 and LCB2. Pyridoxal 5'-phosphate is required as a cofactor.

Its subcellular location is the endoplasmic reticulum membrane. The enzyme catalyses L-serine + hexadecanoyl-CoA + H(+) = 3-oxosphinganine + CO2 + CoA. The protein operates within lipid metabolism; sphingolipid metabolism. Its function is as follows. Serine palmitoyltransferase (SPT). The heterodimer formed with LCB2 constitutes the catalytic core. This Oryza sativa subsp. japonica (Rice) protein is Long chain base biosynthesis protein 1c.